The following is a 117-amino-acid chain: Large ribosomal subunit protein bL19 (117 aa).

Belongs to the bacterial ribosomal protein bL19 family.

Functionally, this protein is located at the 30S-50S ribosomal subunit interface and may play a role in the structure and function of the aminoacyl-tRNA binding site. The chain is Large ribosomal subunit protein bL19 from Desulfotalea psychrophila (strain LSv54 / DSM 12343).